The primary structure comprises 803 residues: Myb-like protein V (803 aa).

2 disordered regions span residues 237-333 (SNIY…LPGL) and 429-803 (KSTS…SRRK). Residues 258-323 (DANDKNENNN…ENNKNKRTKS (66 aa)) are a coiled coil. The segment covering 271-294 (DDADDAAADDADDADDDDMDDESD) has biased composition (acidic residues). Over residues 295 to 315 (SNNNNKNSNNKNSNNKNSNEN) the composition is skewed to low complexity. The Myb-like domain occupies 332–379 (GLWTDEECRSLIKAVMIIGHRWIKIKEDYYSTSKRKPSQLKDKMRSLR). Coiled coils occupy residues 400–429 (EIEKLAVLFQQKEEAQKLAKEKIDSLSNIK) and 463–496 (NNEDNQNESESENEDENDNNEKEKEKRNKKNSAV). A compositionally biased stretch (polar residues) spans 429–438 (KSTSNTSAAS). Composition is skewed to acidic residues over residues 448–480 (NDSDEEVDQDSDNDSNNEDNQNESESENEDEND) and 510–533 (EEEESDEEHNDSEEDSQEDSEENE). Composition is skewed to basic residues over residues 537–553 (KQKRKSNQIKSSPKKLK) and 568–577 (HKSKLKSKPQ). Positions 573-616 (KSKPQRKVEKEESEKEESEEEESEEEEEEDDEDYESEEDKKKKK) form a coiled coil. Acidic residues predominate over residues 586–609 (EKEESEEEESEEEEEEDDEDYESE). 2 stretches are compositionally biased toward low complexity: residues 625 to 636 (TSTHTTTTTTTT) and 666 to 733 (KKSN…PTKK). Residues 786 to 795 (LNKDSKENKK) are compositionally biased toward basic and acidic residues.

The chain is Myb-like protein V (mybV) from Dictyostelium discoideum (Social amoeba).